The chain runs to 85 residues: Antibacterial factor-related peptide 1 (85 aa).

A signal peptide spans 1–19 (MLYFCLLLVLLLPNNGVSS).

In terms of tissue distribution, expressed in the pharynx and body wall muscle.

Its subcellular location is the secreted. In Caenorhabditis elegans, this protein is Antibacterial factor-related peptide 1.